Here is a 334-residue protein sequence, read N- to C-terminus: Holliday junction branch migration complex subunit RuvB (334 aa).

The large ATPase domain (RuvB-L) stretch occupies residues Ala4–Tyr184. Residues Arg24, Gly65, Lys68, Thr69, Thr70, Glu131–Tyr133, Arg174, Tyr184, and Arg221 contribute to the ATP site. Residue Thr69 coordinates Mg(2+). Residues Asn185 to Asp255 are small ATPAse domain (RuvB-S). The head domain (RuvB-H) stretch occupies residues Gly258 to Glu334. Positions 294, 313, and 318 each coordinate DNA.

This sequence belongs to the RuvB family. As to quaternary structure, homohexamer. Forms an RuvA(8)-RuvB(12)-Holliday junction (HJ) complex. HJ DNA is sandwiched between 2 RuvA tetramers; dsDNA enters through RuvA and exits via RuvB. An RuvB hexamer assembles on each DNA strand where it exits the tetramer. Each RuvB hexamer is contacted by two RuvA subunits (via domain III) on 2 adjacent RuvB subunits; this complex drives branch migration. In the full resolvosome a probable DNA-RuvA(4)-RuvB(12)-RuvC(2) complex forms which resolves the HJ.

The protein resides in the cytoplasm. The enzyme catalyses ATP + H2O = ADP + phosphate + H(+). The RuvA-RuvB-RuvC complex processes Holliday junction (HJ) DNA during genetic recombination and DNA repair, while the RuvA-RuvB complex plays an important role in the rescue of blocked DNA replication forks via replication fork reversal (RFR). RuvA specifically binds to HJ cruciform DNA, conferring on it an open structure. The RuvB hexamer acts as an ATP-dependent pump, pulling dsDNA into and through the RuvAB complex. RuvB forms 2 homohexamers on either side of HJ DNA bound by 1 or 2 RuvA tetramers; 4 subunits per hexamer contact DNA at a time. Coordinated motions by a converter formed by DNA-disengaged RuvB subunits stimulates ATP hydrolysis and nucleotide exchange. Immobilization of the converter enables RuvB to convert the ATP-contained energy into a lever motion, pulling 2 nucleotides of DNA out of the RuvA tetramer per ATP hydrolyzed, thus driving DNA branch migration. The RuvB motors rotate together with the DNA substrate, which together with the progressing nucleotide cycle form the mechanistic basis for DNA recombination by continuous HJ branch migration. Branch migration allows RuvC to scan DNA until it finds its consensus sequence, where it cleaves and resolves cruciform DNA. This is Holliday junction branch migration complex subunit RuvB from Shewanella oneidensis (strain ATCC 700550 / JCM 31522 / CIP 106686 / LMG 19005 / NCIMB 14063 / MR-1).